A 145-amino-acid polypeptide reads, in one-letter code: MRTTYMAKPNEVERKWYVVDAAGKTLGRLASEVAAILRGKHKPTFTPHVDCGDHVIIINAEKIELTGKKLTKKLYYRHSLHPGGLKVRTALEMRTNYPEQMLERAIRGMLPKGRLGRQMFKKLHVYRGSEHPHQAQKPEVYELRG.

The protein belongs to the universal ribosomal protein uL13 family. In terms of assembly, part of the 50S ribosomal subunit.

In terms of biological role, this protein is one of the early assembly proteins of the 50S ribosomal subunit, although it is not seen to bind rRNA by itself. It is important during the early stages of 50S assembly. This chain is Large ribosomal subunit protein uL13, found in Geobacillus sp. (strain WCH70).